The primary structure comprises 767 residues: GPI ethanolamine phosphate transferase 2 (767 aa).

Residues Asn-186 and Asn-401 are each glycosylated (N-linked (GlcNAc...) asparagine). 2 helical membrane-spanning segments follow: residues 407 to 427 and 434 to 454; these read LGLF…YGLG and VTFL…SSYV. The N-linked (GlcNAc...) asparagine glycan is linked to Asn-490. 3 helical membrane passes run 513–533, 538–558, and 595–615; these read ILWA…CLNS, IWRS…LVFV, and IPIF…KMSA. Residue Asn-627 is glycosylated (N-linked (GlcNAc...) asparagine). 3 helical membrane-spanning segments follow: residues 655–675, 695–715, and 733–755; these read SVVL…IWWA, TLLT…CTML, and LAWT…SQVL.

This sequence belongs to the PIGG/PIGN/PIGO family. PIGG subfamily.

It localises to the endoplasmic reticulum membrane. Its pathway is glycolipid biosynthesis; glycosylphosphatidylinositol-anchor biosynthesis. Functionally, ethanolamine phosphate transferase involved in glycosylphosphatidylinositol-anchor biosynthesis. Transfers ethanolamine phosphate to the GPI second mannose. The sequence is that of GPI ethanolamine phosphate transferase 2 (las21) from Aspergillus fumigatus (strain ATCC MYA-4609 / CBS 101355 / FGSC A1100 / Af293) (Neosartorya fumigata).